Here is an 841-residue protein sequence, read N- to C-terminus: Nuclear RNA export factor 2 (841 aa).

Residues 1–285 form an RNA-binding unit probably involved in Piwi-dependent recruitment and single-stranded RNA-PPNP complex formation region; the sequence is MPNQMRVLDF…NFELVDGKPF (285 aa). LRR repeat units follow at residues 200–221, 224–245, and 249–270; these read RLNG…TLLA, DYAL…CRAL, and RARE…PANI. Residues 286 to 553 form a necessary for silencing function region; the sequence is NMLHKIFSPL…EYVRAVKEVF (268 aa). An RRM domain is found at 325–408; it reads WHAFMIPDPS…IFRYYLRMNV (84 aa). LRR repeat units lie at residues 475–496, 500–521, and 524–545; these read TCSE…HVLG, CLRA…HSLG, and PLKS…PSEY. Positions 585–758 constitute an NTF2 domain; it reads LVGAFLENYL…LKIANERLHI (174 aa). Positions 788 to 841 constitute a TAP-C domain; it reads DVKDHKLLLFQEVTGLISTWVTSIVEEADWDFERALKLFIQKNADHEIPDLAFA.

Belongs to the NXF family. As to quaternary structure, in the ovaries, part of a complex composed of at least Panx, nxf2, piwi and Nxt1. The complex is knowns as Panx-induced cotranscriptional silencing (PICTS) complex, Panx-nxf2-dependent TAP/p15 silencing (Pandas complex), SFiNX (silencing factor interacting nuclear export variant) or piwi-Panx-nxf2-p15 (PPNP) complex. Interacts (via TAP-C domain) with Panx (via NIR region); the interaction is direct. Interacts (via NTF2 domain) with Nxt1; the interaction is direct and prevents Nxt1 binding to nucleoporins. Interacts with sbr/Nxf1. In terms of tissue distribution, expressed in female gonads (at protein level). Expressed ubiquitously.

The protein resides in the cytoplasm. Its subcellular location is the nucleus. It is found in the nucleoplasm. Functionally, may be involved in the export of mRNA from the nucleus to the cytoplasm. In the ovaries, forms a complex with nxf2, piwi and Nxt1 which acts as effectors of cotranscriptional transposon silencing. On recruitment to a target transcript, interacts with single stranded RNA, thereby anchoring the complex via the nascent target transcript to chromatin and allowing Panx to recruit silencing effectors to establishing repressive heterochromatin at transposon loci. Does not affect piRNA biogenesis. The interaction with Panx stabilizes the nuclear protein complex. Does not bind nucleoporins, but regulates sbr/Nxf1 binding to nucleoporins and, indirectly, transposon exports. The protein is Nuclear RNA export factor 2 (nxf2) of Drosophila melanogaster (Fruit fly).